We begin with the raw amino-acid sequence, 581 residues long: Activating signal cointegrator 1 (581 aa).

Residue Ala2 is modified to N-acetylalanine. A disordered region spans residues 100–121; it reads DQLKRSRRKGRNKQEVPAFPEP. The C4-type zinc-finger motif lies at 167 to 219; it reads GRHPCDCLGQKHKLINNCLVCGRIVCEQEGSGPCLFCGSLVCTNEEQDILQRD. Residues 200–300 form a mediates interaction with DDRGK1 region; that stretch reads CLFCGSLVCT…ASDSNQWLSK (101 aa). Ser276 bears the Phosphoserine mark. Tyr289 bears the Phosphotyrosine mark. A mediates interaction with UFL1 region spans residues 300 to 400; sequence KVEREMLQKR…WVDNTGSTPQ (101 aa). Residues Lys324 and Lys334 each participate in a glycyl lysine isopeptide (Lys-Gly) (interchain with G-Cter in UFM1) cross-link. A compositionally biased stretch (polar residues) spans 390 to 406; the sequence is QWVDNTGSTPQKKTSLS. The disordered stretch occupies residues 390-410; that stretch reads QWVDNTGSTPQKKTSLSAGPR. One can recognise an ASCH domain in the interval 437–531; it reads LSMHQPWASL…FQEQFPDISQ (95 aa).

In terms of assembly, interacts with the thyroid hormone receptor/TR (via the ligand-binding domain); this interaction requires the presence of thyroid hormone. Interacts with the androgen receptor/AR; in an androgen, testosterone and dihydrotestosterone-dependent manner. Interacts with ESR1 (estrogen ligand-bound); competes with UFSP2. Interacts with UFSP2; competes with ligand-bound ESR1. Interacts with DDRGK1 and UFL1; the interaction with DDRGK1 is direct. Interacts with NCOA1. Interacts with EP300. Part of the ASC-1 complex, that contains TRIP4, ASCC1, ASCC2 and ASCC3. Identified in the RQT (ribosome quality control trigger) complex, that contains ASCC2, ASCC3 and TRIP4. Interacts with NEK6. Interacts with CSRP1. Interacts with ZCCHC4. Phosphorylated by NEK6. Post-translationally, polyufmylated by the UFM1-conjugating system composed of the enzymes UBA5, UFC1 and UFL1. Deufmylated by the protease UFSP2. Ufmylation of TRIP4 is promoted by ligand-bound nuclear receptors that compete with UFSP2 for interaction with TRIP4. Nuclear receptors-induced ufmylation promotes the recruitment of additional transcriptional coactivators like EP300 and NCOA1 and therefore the assembly of a coactivator complex facilitating nuclear receptor-mediated transcription. In terms of tissue distribution, ubiquitously expressed. Expressed in the spinal cord, brain, paraspinal ganglia, thyroid, and submandibular glands. Expressed at low level in all the muscles (at protein level) but with higher expression in axial than in limb muscles.

It is found in the nucleus. It localises to the cytoplasm. The protein resides in the cytosol. Its subcellular location is the cytoskeleton. The protein localises to the microtubule organizing center. It is found in the centrosome. Transcription coactivator which associates with nuclear receptors, transcriptional coactivators including EP300, CREBBP and NCOA1, and basal transcription factors like TBP and TFIIA to facilitate nuclear receptors-mediated transcription. May thereby play an important role in establishing distinct coactivator complexes under different cellular conditions. Plays a role in thyroid hormone receptor and estrogen receptor transactivation. Also involved in androgen receptor transactivation. Plays a pivotal role in the transactivation of NF-kappa-B, SRF and AP1. Acts as a mediator of transrepression between nuclear receptor and either AP1 or NF-kappa-B. May play a role in the development of neuromuscular junction. May play a role in late myogenic differentiation. Also functions as part of the RQC trigger (RQT) complex that activates the ribosome quality control (RQC) pathway, a pathway that degrades nascent peptide chains during problematic translation. The chain is Activating signal cointegrator 1 from Mus musculus (Mouse).